The chain runs to 290 residues: Coiled-coil domain-containing protein 137 (290 aa).

Disordered regions lie at residues 1–92 (MARP…EAQV), 98–117 (LEKE…FKQR), 139–181 (LSKN…EARA), and 269–290 (RQEM…HACL). The span at 20-39 (SGQPQGRRQQQAQGQQRSAS) shows a compositional bias: low complexity. Positions 56–79 (KNQDEQEIPFRLREIMRSRQEMKK) are enriched in basic and acidic residues. Residues 66–89 (RLREIMRSRQEMKKTLSNKKRKKE) adopt a coiled-coil conformation. Basic and acidic residues predominate over residues 154–163 (PKKEKSERKK). A coiled-coil region spans residues 155 to 192 (KKEKSERKKAFQKRRLEKAQRKREARAVDRLEQELLKD). Residues 164–178 (AFQKRRLEKAQRKRE) show a composition bias toward basic residues.

The protein resides in the chromosome. The sequence is that of Coiled-coil domain-containing protein 137 (Ccdc137) from Mus musculus (Mouse).